A 337-amino-acid chain; its full sequence is Ribosomal RNA small subunit methyltransferase H (337 aa).

Residues 36–38 (GGH), Asp56, Phe82, Asp100, and Gln107 each bind S-adenosyl-L-methionine. Positions 314 to 337 (GLERRSGRIPNPRSPIPASQGDAR) are disordered.

Belongs to the methyltransferase superfamily. RsmH family.

It is found in the cytoplasm. The catalysed reaction is cytidine(1402) in 16S rRNA + S-adenosyl-L-methionine = N(4)-methylcytidine(1402) in 16S rRNA + S-adenosyl-L-homocysteine + H(+). Specifically methylates the N4 position of cytidine in position 1402 (C1402) of 16S rRNA. The sequence is that of Ribosomal RNA small subunit methyltransferase H from Xanthomonas oryzae pv. oryzae (strain PXO99A).